An 887-amino-acid chain; its full sequence is Transportin-2 (887 aa).

20 HEAT repeats span residues 9–36 (GLQQVLQLLKDSQSPNTATQRIVQDKLK), 41–79 (FPDFNNYLIFVLTRLKSEDEPTRSLSGLILKNNVKAHYQ), 88–121 (FIKQECLNNIGDASSLIRATIGILITTIASKGEL), 127–164 (LLPQLCNLLNSEDYNTCEGAFGALQKICEDSSELLDSD), 171–201 (NIMIPKFLQFFKHCSPKIRSHAIACVNQFIM), 214–241 (FIEHLFALAVDDDPEVRKNVCRALVMLL), 253–280 (HSIIQYMLQRTQDHDENVALEACEFWLT), 296–386 (VQLI…LANV), 394–422 (HLLPLLKGLLFHPEWVVKESGILVLGAIA), 434–461 (PELIPHLIQCLSDKKALVRSIACWTLSR), 475–508 (LKPLMTELLKRILDGNKRVQEAACSAFATLEEEA), 516–549 (LSYILDTLVFAFGKYQHKNLLILYDAIGTLADSV), 557–595 (EYIQKLMPPLIQKWNELKDEDKDLFPLLECLSSVATALQ), 603–654 (EPVY…GLGG), 665–696 (IMTLLFQCMQDSMPEVRQSSFALLGDLTKACF), 704–737 (AEFMPILGTNLNPEFISVCNNATWAIGEICMQMG), 745–780 (QMVLNNLVEIINRPNTPKTLLENTAITIGRLGYVCP), 788–821 (QQFIRPWCTSLRNIRDNEEKDSAFRGICMMIGVN), 830–861 (IFFCDAVASWVSPKDDLRDMFYKILHGFKDQV), and 864–884 (ENWQQFSEQFPPLLKERLAAF). The Importin N-terminal domain maps to 31 to 99 (VQDKLKQLNQ…KQECLNNIGD (69 aa)). Residues 344–363 (TLTHEAERPDSSEDAEDDDD) are disordered. Lys852 carries the post-translational modification N6-acetyllysine.

It belongs to the importin beta family. Importin beta-2 subfamily.

Its subcellular location is the cytoplasm. It localises to the nucleus. In terms of biological role, probably functions in nuclear protein import as nuclear transport receptor. Serves as receptor for nuclear localization signals (NLS) in cargo substrates. Is thought to mediate docking of the importin/substrate complex to the nuclear pore complex (NPC) through binding to nucleoporin and the complex is subsequently translocated through the pore by an energy requiring, Ran-dependent mechanism. At the nucleoplasmic side of the NPC, Ran binds to the importin, the importin/substrate complex dissociates and importin is re-exported from the nucleus to the cytoplasm where GTP hydrolysis releases Ran. The directionality of nuclear import is thought to be conferred by an asymmetric distribution of the GTP- and GDP-bound forms of Ran between the cytoplasm and nucleus. This Mus musculus (Mouse) protein is Transportin-2 (Tnpo2).